Here is a 516-residue protein sequence, read N- to C-terminus: Cytochrome P450 1A2 (516 aa).

O-linked (GlcNAc) serine glycosylation is present at Ser69. Substrate-binding positions include Phe226 and Asp361–Leu365. Cys458 is a binding site for heme.

The protein belongs to the cytochrome P450 family. As to quaternary structure, interacts with PGRMC1; the interaction requires PGRMC1 homodimerization. Requires heme as cofactor.

It localises to the endoplasmic reticulum membrane. The protein resides in the microsome membrane. The enzyme catalyses an organic molecule + reduced [NADPH--hemoprotein reductase] + O2 = an alcohol + oxidized [NADPH--hemoprotein reductase] + H2O + H(+). It carries out the reaction 17beta-estradiol + reduced [NADPH--hemoprotein reductase] + O2 = 2-hydroxy-17beta-estradiol + oxidized [NADPH--hemoprotein reductase] + H2O + H(+). The catalysed reaction is 17beta-estradiol + reduced [NADPH--hemoprotein reductase] + O2 = 4-hydroxy-17beta-estradiol + oxidized [NADPH--hemoprotein reductase] + H2O + H(+). It catalyses the reaction estrone + reduced [NADPH--hemoprotein reductase] + O2 = 2-hydroxyestrone + oxidized [NADPH--hemoprotein reductase] + H2O + H(+). The enzyme catalyses estrone + reduced [NADPH--hemoprotein reductase] + O2 = 4-hydroxyestrone + oxidized [NADPH--hemoprotein reductase] + H2O + H(+). It carries out the reaction cholesterol + reduced [NADPH--hemoprotein reductase] + O2 = 25-hydroxycholesterol + oxidized [NADPH--hemoprotein reductase] + H2O + H(+). The catalysed reaction is all-trans-retinol + reduced [NADPH--hemoprotein reductase] + O2 = all-trans-retinal + oxidized [NADPH--hemoprotein reductase] + 2 H2O + H(+). It catalyses the reaction all-trans-retinal + reduced [NADPH--hemoprotein reductase] + O2 = all-trans-retinoate + oxidized [NADPH--hemoprotein reductase] + H2O + 2 H(+). The enzyme catalyses (5Z,8Z,11Z,14Z)-eicosatetraenoate + reduced [NADPH--hemoprotein reductase] + O2 = (14R,15S)-epoxy-(5Z,8Z,11Z)-eicosatrienoate + oxidized [NADPH--hemoprotein reductase] + H2O + H(+). It carries out the reaction (5Z,8Z,11Z,14Z)-eicosatetraenoate + reduced [NADPH--hemoprotein reductase] + O2 = (14S,15R)-epoxy-(5Z,8Z,11Z)-eicosatrienoate + oxidized [NADPH--hemoprotein reductase] + H2O + H(+). The catalysed reaction is (5Z,8Z,11Z,14Z,17Z)-eicosapentaenoate + reduced [NADPH--hemoprotein reductase] + O2 = (17R,18S)-epoxy-(5Z,8Z,11Z,14Z)-eicosatetraenoate + oxidized [NADPH--hemoprotein reductase] + H2O + H(+). It catalyses the reaction (4Z,7Z,10Z,13Z,16Z,19Z)-docosahexaenoate + reduced [NADPH--hemoprotein reductase] + O2 = (19R,20S)-epoxy-(4Z,7Z,10Z,13Z,16Z)-docosapentaenoate + oxidized [NADPH--hemoprotein reductase] + H2O + H(+). The enzyme catalyses (5S)-hydroperoxy-(6E,8Z,11Z,14Z)-eicosatetraenoate = 5-oxo-(6E,8Z,11Z,14Z)-eicosatetraenoate + H2O. It carries out the reaction (12S)-hydroperoxy-(5Z,8Z,10E,14Z)-eicosatetraenoate = 12-oxo-(5Z,8Z,10E,14Z)-eicosatetraenoate + H2O. The catalysed reaction is (15S)-hydroperoxy-(5Z,8Z,11Z,13E)-eicosatetraenoate = 15-oxo-(5Z,8Z,11Z,13E)-eicosatetraenoate + H2O. It catalyses the reaction (13S)-hydroperoxy-(9Z,11E)-octadecadienoate = 13-oxo-(9Z,11E)-octadecadienoate + H2O. The enzyme catalyses (5Z,8Z,11Z,14Z)-eicosatetraenoate + reduced [NADPH--hemoprotein reductase] + O2 = 13-hydroxy-(5Z,8Z,11Z,14Z)-eicosatetraenoate + oxidized [NADPH--hemoprotein reductase] + H2O + H(+). It carries out the reaction (5Z,8Z,11Z,14Z)-eicosatetraenoate + reduced [NADPH--hemoprotein reductase] + O2 = 19-hydroxy-(5Z,8Z,11Z,14Z)-eicosatetraenoate + oxidized [NADPH--hemoprotein reductase] + H2O + H(+). The catalysed reaction is (9Z,12Z)-octadecadienoate + reduced [NADPH--hemoprotein reductase] + O2 = 11-hydroxy-(9Z,12Z)-octadecadienoate + oxidized [NADPH--hemoprotein reductase] + H2O + H(+). Its pathway is cofactor metabolism; retinol metabolism. It participates in steroid metabolism; cholesterol metabolism. It functions in the pathway lipid metabolism; arachidonate metabolism. Its function is as follows. A cytochrome P450 monooxygenase involved in the metabolism of various endogenous substrates, including fatty acids, steroid hormones and vitamins. Mechanistically, uses molecular oxygen inserting one oxygen atom into a substrate, and reducing the second into a water molecule, with two electrons provided by NADPH via cytochrome P450 reductase (NADPH--hemoprotein reductase). Catalyzes the hydroxylation of carbon-hydrogen bonds. Exhibits high catalytic activity for the formation of hydroxyestrogens from estrone (E1) and 17beta-estradiol (E2), namely 2-hydroxy E1 and E2. Metabolizes cholesterol toward 25-hydroxycholesterol, a physiological regulator of cellular cholesterol homeostasis. May act as a major enzyme for all-trans retinoic acid biosynthesis in the liver. Catalyzes two successive oxidative transformation of all-trans retinol to all-trans retinal and then to the active form all-trans retinoic acid. Primarily catalyzes stereoselective epoxidation of the last double bond of polyunsaturated fatty acids (PUFA), displaying a strong preference for the (R,S) stereoisomer. Catalyzes bisallylic hydroxylation and omega-1 hydroxylation of PUFA. May also participate in eicosanoids metabolism by converting hydroperoxide species into oxo metabolites (lipoxygenase-like reaction, NADPH-independent). Plays a role in the oxidative metabolism of xenobiotics. Catalyzes the N-hydroxylation of heterocyclic amines and the O-deethylation of phenacetin. Metabolizes caffeine via N3-demethylation. This is Cytochrome P450 1A2 (CYP1A2) from Oryctolagus cuniculus (Rabbit).